The primary structure comprises 158 residues: Small ribosomal subunit protein uS7 (158 aa).

This sequence belongs to the universal ribosomal protein uS7 family. In terms of assembly, part of the 30S ribosomal subunit. Contacts proteins S9 and S11.

Functionally, one of the primary rRNA binding proteins, it binds directly to 16S rRNA where it nucleates assembly of the head domain of the 30S subunit. Is located at the subunit interface close to the decoding center, probably blocks exit of the E-site tRNA. In Flavobacterium psychrophilum (strain ATCC 49511 / DSM 21280 / CIP 103535 / JIP02/86), this protein is Small ribosomal subunit protein uS7.